The primary structure comprises 468 residues: GTPase Der (468 aa).

2 EngA-type G domains span residues Pro-3–Asp-169 and Ile-199–Thr-372. GTP-binding positions include Gly-9–Ser-16, Asp-56–Phe-60, Asn-119–Glu-122, Gly-205–Ser-212, Asp-252–Leu-256, and Asn-317–Asp-320. The region spanning Cys-373–His-457 is the KH-like domain.

The protein belongs to the TRAFAC class TrmE-Era-EngA-EngB-Septin-like GTPase superfamily. EngA (Der) GTPase family. In terms of assembly, associates with the 50S ribosomal subunit.

In terms of biological role, GTPase that plays an essential role in the late steps of ribosome biogenesis. In Verminephrobacter eiseniae (strain EF01-2), this protein is GTPase Der.